The following is a 360-amino-acid chain: Zinc finger protein ztf-2 (360 aa).

The segment at 19–41 is disordered; sequence LSSPEKEHRRKRRRGEVANPSNT. C2H2-type zinc fingers lie at residues 87–109, 115–138, and 180–203; these read RTCS…KRVH, FKCR…AKTH, and YRCQ…SHLH. Over residues 248–260 the composition is skewed to low complexity; it reads PLSPCRSESSSDS. Residues 248–272 are disordered; the sequence is PLSPCRSESSSDSGIQTDPEEEASI.

Expressed in pharyngeal epithelium/arcade, which connects the pharynx to the mouth.

Its function is as follows. Transcription factor. Represses gene expression, probably via binding to DNA consensus sequence 5'-[AT][CT]TTCC[AC][AG]-3' in promoter regions. May play a role in pharynx morphogenesis. The chain is Zinc finger protein ztf-2 from Caenorhabditis elegans.